A 149-amino-acid chain; its full sequence is Large ribosomal subunit protein bL9 (149 aa).

It belongs to the bacterial ribosomal protein bL9 family.

Functionally, binds to the 23S rRNA. The protein is Large ribosomal subunit protein bL9 of Helicobacter pylori (strain P12).